Consider the following 650-residue polypeptide: 1-deoxy-D-xylulose-5-phosphate synthase (650 aa).

Thiamine diphosphate contacts are provided by residues histidine 73 and serine 113–alanine 115. Aspartate 145 serves as a coordination point for Mg(2+). Thiamine diphosphate is bound by residues glycine 146 to alanine 147, asparagine 175, tyrosine 287, and glutamate 369. Asparagine 175 contributes to the Mg(2+) binding site. Residues serine 629–alanine 650 are disordered. Residues leucine 633–alanine 644 are compositionally biased toward basic and acidic residues.

Belongs to the transketolase family. DXPS subfamily. As to quaternary structure, homodimer. It depends on Mg(2+) as a cofactor. Thiamine diphosphate serves as cofactor.

It carries out the reaction D-glyceraldehyde 3-phosphate + pyruvate + H(+) = 1-deoxy-D-xylulose 5-phosphate + CO2. It functions in the pathway metabolic intermediate biosynthesis; 1-deoxy-D-xylulose 5-phosphate biosynthesis; 1-deoxy-D-xylulose 5-phosphate from D-glyceraldehyde 3-phosphate and pyruvate: step 1/1. Catalyzes the acyloin condensation reaction between C atoms 2 and 3 of pyruvate and glyceraldehyde 3-phosphate to yield 1-deoxy-D-xylulose-5-phosphate (DXP). This chain is 1-deoxy-D-xylulose-5-phosphate synthase, found in Clavibacter sepedonicus (Clavibacter michiganensis subsp. sepedonicus).